The sequence spans 561 residues: Centromere protein T (561 aa).

A disordered region spans residues Met-1–Arg-78. Residues Arg-18 to Thr-27 are compositionally biased toward basic and acidic residues. The span at Thr-45 to Thr-57 shows a compositional bias: polar residues. Ser-47 is modified (phosphoserine). Thr-85 carries the post-translational modification Phosphothreonine. The tract at residues Ile-93 to Pro-421 is flexible stalk domain. 3 disordered regions span residues Ala-114–Leu-134, His-256–Ala-293, and Ser-314–Lys-457. The segment covering Arg-276–Pro-289 has biased composition (polar residues). Residues Gly-329–Gly-341 show a composition bias toward basic and acidic residues. Residues Ser-343, Ser-345, Ser-356, Ser-373, Ser-385, Ser-386, and Ser-397 each carry the phosphoserine modification. Positions Thr-365–Thr-376 are enriched in polar residues. Residues Arg-439–Arg-450 show a composition bias toward low complexity.

This sequence belongs to the CENP-T/CNN1 family. Component of the CENPA-CAD complex, composed of CENPI, CENPK, CENPL, CENPO, CENPP, CENPQ, CENPR and CENPS. The CENPA-CAD complex is probably recruited on centromeres by the CENPA-NAC complex, at least composed of CENPA, CENPC, CENPH, CENPM, CENPN, CENPT and CENPU. Identified in a centromeric complex containing histones H2A, H2B, H3 and H4, and at least CENPA, CENPB, CENPC, CENPT, CENPN, HJURP, SUPT16H, SSRP1 and RSF1. Interacts (via N-terminus) with the NDC80 complex. Heterodimer with CENPW; this dimer coassembles with CENPS-CENPX heterodimers at centromeres to form the tetrameric CENP-T-W-S-X complex. Dynamically phosphorylated during the cell cycle. Phosphorylated during G2 phase, metaphase and anaphase, but not during telophase or G1 phase.

The protein localises to the nucleus. The protein resides in the chromosome. It localises to the centromere. It is found in the kinetochore. Its function is as follows. Component of the CENPA-NAC (nucleosome-associated) complex, a complex that plays a central role in assembly of kinetochore proteins, mitotic progression and chromosome segregation. The CENPA-NAC complex recruits the CENPA-CAD (nucleosome distal) complex and may be involved in incorporation of newly synthesized CENPA into centromeres. Part of a nucleosome-associated complex that binds specifically to histone H3-containing nucleosomes at the centromere, as opposed to nucleosomes containing CENPA. Component of the heterotetrameric CENP-T-W-S-X complex that binds and supercoils DNA, and plays an important role in kinetochore assembly. CENPT has a fundamental role in kinetochore assembly and function. It is one of the inner kinetochore proteins, with most further proteins binding downstream. Required for normal chromosome organization and normal progress through mitosis. The sequence is that of Centromere protein T (CENPT) from Macaca fascicularis (Crab-eating macaque).